The primary structure comprises 585 residues: Type IV pilus assembly ATPase TfpB (585 aa).

Gly346–Thr351 lines the ATP pocket. Zn(2+) contacts are provided by Cys476, Cys479, Cys511, and Cys514.

The protein belongs to the GSP E family.

It localises to the cytoplasm. ATPase component of the type IV pilus (T4P). Acts as a molecular motor to provide the energy that is required for biogenesis of the pilus and the extrusion of substrates generated in the cytoplasm. TfpB is required for optimal T4P extension and, consequently, efficient natural transformation. May play a role in initiating T4P extension. This is Type IV pilus assembly ATPase TfpB from Acinetobacter baylyi (strain ATCC 33305 / BD413 / ADP1).